The primary structure comprises 304 residues: Putative ankyrin repeat protein R602 (304 aa).

ANK repeat units follow at residues 82–117, 118–146, 147–176, 178–206, 207–236, and 238–266; these read LIRY…DITF, NDNF…DVHA, DNEF…DPFC, DNIV…DINA, GNNY…SIND, and SPND…DIST.

The sequence is that of Putative ankyrin repeat protein R602 from Acanthamoeba polyphaga (Amoeba).